We begin with the raw amino-acid sequence, 231 residues long: ADP-ribosylation factor-like protein 6-interacting protein 4 (231 aa).

Residues 1-19 are compositionally biased toward basic residues; sequence MAHVSSRKRSRSRSRSRGR. The disordered stretch occupies residues 1-154; it reads MAHVSSRKRS…EDNDGPVLTD (154 aa). Positions 20 to 34 are enriched in basic and acidic residues; it reads RGSEKRSKRSSKDSS. Residues 64–89 are compositionally biased toward low complexity; that stretch reads TSRSSSSSSSSSSSSSSSSTSSSSSS. The segment covering 92 to 119 has biased composition (basic residues); sequence RKKRGKHKDKKKRKKKKKRKKKMKRKGK. Phosphoserine is present on residues Ser-142 and Ser-176. A Glycyl lysine isopeptide (Lys-Gly) (interchain with G-Cter in SUMO2) cross-link involves residue Lys-193.

This sequence belongs to the ARL6IP4 family. In terms of assembly, interacts with ARL6. Interacts with ZCCHC17. Interacts with SRSF2.

Its subcellular location is the nucleus. The protein localises to the nucleolus. It is found in the nucleus speckle. Its function is as follows. Involved in modulating alternative pre-mRNA splicing with either 5' distal site activation or preferential use of 3' proximal site. The sequence is that of ADP-ribosylation factor-like protein 6-interacting protein 4 (Arl6ip4) from Rattus norvegicus (Rat).